The sequence spans 417 residues: NADH-quinone oxidoreductase subunit D (417 aa).

The protein belongs to the complex I 49 kDa subunit family. NDH-1 is composed of 14 different subunits. Subunits NuoB, C, D, E, F, and G constitute the peripheral sector of the complex.

It is found in the cell inner membrane. It catalyses the reaction a quinone + NADH + 5 H(+)(in) = a quinol + NAD(+) + 4 H(+)(out). Functionally, NDH-1 shuttles electrons from NADH, via FMN and iron-sulfur (Fe-S) centers, to quinones in the respiratory chain. The immediate electron acceptor for the enzyme in this species is believed to be ubiquinone. Couples the redox reaction to proton translocation (for every two electrons transferred, four hydrogen ions are translocated across the cytoplasmic membrane), and thus conserves the redox energy in a proton gradient. The polypeptide is NADH-quinone oxidoreductase subunit D (Cupriavidus metallidurans (strain ATCC 43123 / DSM 2839 / NBRC 102507 / CH34) (Ralstonia metallidurans)).